Here is a 2197-residue protein sequence, read N- to C-terminus: uncharacterized protein (2197 aa).

N-acetylserine is present on Ser2. An HEAT repeat occupies 2159–2195 (TIPFLAELLEDVELSVKSLAQDIIKQMEEMSGESLAE).

It belongs to the HEATR1/UTP10 family.

Its subcellular location is the nucleus. It is found in the nucleolus. Involved in nucleolar processing of pre-18S ribosomal RNA. Involved in ribosome biosynthesis. This is an uncharacterized protein from Arabidopsis thaliana (Mouse-ear cress).